We begin with the raw amino-acid sequence, 239 residues long: Increased recombination centers protein 22-1 (239 aa).

The N-terminal stretch at 1–19 (MKLSTIFTAFAATIATVAG) is a signal peptide. Over 20 to 161 (YETTGSKQTV…AAVSFFDPRL (142 aa)) the chain is Lumenal. A helical membrane pass occupies residues 162 to 182 (IFLELVLLITFAGLIYVGYEI). Topologically, residues 183-239 (WGKQYFKGVAPVKAKKVSAAKASSPVASGPSTTSATGYDTNWIPESHLKQKKTKKVN) are cytoplasmic. The segment covering 201–213 (AAKASSPVASGPS) has biased composition (low complexity). A disordered region spans residues 201 to 222 (AAKASSPVASGPSTTSATGYDT).

Belongs to the IRC22 family.

It localises to the endoplasmic reticulum membrane. Functionally, is probably involved in a pathway contributing to genomic integrity. The chain is Increased recombination centers protein 22-1 (IRC22-1) from Candida albicans (strain SC5314 / ATCC MYA-2876) (Yeast).